A 162-amino-acid chain; its full sequence is ATP synthase subunit b (162 aa).

A helical membrane pass occupies residues 6–28 (LVTFVLTIVNILVLFYLLKRFLF).

It belongs to the ATPase B chain family. In terms of assembly, F-type ATPases have 2 components, F(1) - the catalytic core - and F(0) - the membrane proton channel. F(1) has five subunits: alpha(3), beta(3), gamma(1), delta(1), epsilon(1). F(0) has three main subunits: a(1), b(2) and c(10-14). The alpha and beta chains form an alternating ring which encloses part of the gamma chain. F(1) is attached to F(0) by a central stalk formed by the gamma and epsilon chains, while a peripheral stalk is formed by the delta and b chains.

The protein localises to the cell membrane. F(1)F(0) ATP synthase produces ATP from ADP in the presence of a proton or sodium gradient. F-type ATPases consist of two structural domains, F(1) containing the extramembraneous catalytic core and F(0) containing the membrane proton channel, linked together by a central stalk and a peripheral stalk. During catalysis, ATP synthesis in the catalytic domain of F(1) is coupled via a rotary mechanism of the central stalk subunits to proton translocation. Its function is as follows. Component of the F(0) channel, it forms part of the peripheral stalk, linking F(1) to F(0). This is ATP synthase subunit b from Natranaerobius thermophilus (strain ATCC BAA-1301 / DSM 18059 / JW/NM-WN-LF).